The following is a 456-amino-acid chain: Arginine biosynthesis bifunctional protein ArgJ, mitochondrial (456 aa).

Substrate-binding residues include T184, K213, T224, E311, N451, and T456. Residue T224 is the Nucleophile of the active site.

The protein belongs to the ArgJ family. Heterodimer of an alpha and a beta chain. In terms of processing, the alpha and beta chains are autoproteolytically processed from a single precursor protein within the mitochondrion.

Its subcellular location is the mitochondrion matrix. It carries out the reaction N(2)-acetyl-L-ornithine + L-glutamate = N-acetyl-L-glutamate + L-ornithine. The enzyme catalyses L-glutamate + acetyl-CoA = N-acetyl-L-glutamate + CoA + H(+). Its pathway is amino-acid biosynthesis; L-arginine biosynthesis; L-ornithine and N-acetyl-L-glutamate from L-glutamate and N(2)-acetyl-L-ornithine (cyclic): step 1/1. The protein operates within amino-acid biosynthesis; L-arginine biosynthesis; N(2)-acetyl-L-ornithine from L-glutamate: step 1/4. Functionally, catalyzes two activities which are involved in the cyclic version of arginine biosynthesis: the synthesis of acetylglutamate from glutamate and acetyl-CoA, and of ornithine by transacetylation between acetylornithine and glutamate. This Aspergillus oryzae (strain ATCC 42149 / RIB 40) (Yellow koji mold) protein is Arginine biosynthesis bifunctional protein ArgJ, mitochondrial.